A 341-amino-acid chain; its full sequence is Putative ankyrin repeat protein FPV031 (341 aa).

ANK repeat units lie at residues 23–55 (DRNSLLLVATKRNYIDVVRYLVKKGVDINFQET), 58–87 (DNLTPLMIASRFNSHQLVELLLNNGAIINQ), 92–124 (CGNTALHLAVKNDNRITVDILLFHGANTNITNN), 125–158 (DGFTPLHKAVIYNASIDIIKKLLRYKADVNIRDN), and 163–195 (TGLTPLDIAMSCNNYEIISLLVSHVIRLDYSTC).

The sequence is that of Putative ankyrin repeat protein FPV031 (ANK3) from Fowlpox virus (strain NVSL) (FPV).